The sequence spans 539 residues: Laccase-1 (539 aa).

A signal peptide spans methionine 1–alanine 21. Plastocyanin-like domains follow at residues alanine 37–glutamate 154 and glutamate 166–glycine 309. N-linked (GlcNAc...) asparagine glycosylation is present at asparagine 78. 2 residues coordinate Cu cation: histidine 88 and histidine 90. Intrachain disulfides connect cysteine 109/cysteine 513 and cysteine 141/cysteine 228. Asparagine 120 carries an N-linked (GlcNAc...) asparagine glycan. Histidine 133 and histidine 135 together coordinate Cu cation. Residues asparagine 202, asparagine 233, asparagine 240, asparagine 293, asparagine 318, asparagine 353, asparagine 385, and asparagine 405 are each glycosylated (N-linked (GlcNAc...) asparagine). Residues serine 374 to proline 495 form the Plastocyanin-like 3 domain. Cu cation-binding residues include histidine 421, histidine 424, and histidine 426. An N-linked (GlcNAc...) asparagine glycan is attached at asparagine 457. Residues histidine 476, cysteine 477, histidine 478, and histidine 482 each coordinate Cu cation. The N-linked (GlcNAc...) asparagine glycan is linked to asparagine 532.

It belongs to the multicopper oxidase family. Cu cation is required as a cofactor.

Its subcellular location is the secreted. It carries out the reaction 4 hydroquinone + O2 = 4 benzosemiquinone + 2 H2O. Its activity is regulated as follows. Inhibited by chloride ions. Inhibited by citrate. Inhibited by oxalate. Activated by acetate. In vitro, has activity towards 2,2'-azino-bis(3-ethylbenzthiazoline-6-sulfonic acid) (ABTS), 2,6-dimethoxy-phenol, and guaiacol. Although brown rot fungi preferentially degrade hemicellulose and cellulose, the enzyme may contribute to generating small amounts of lignin breakdown products required for catalytic reactions. The chain is Laccase-1 from Fomitopsis schrenkii (Brown rot fungus).